Reading from the N-terminus, the 227-residue chain is PKHD-type hydroxylase Neut_0373 (227 aa).

The region spanning 78–179 is the Fe2OG dioxygenase domain; the sequence is KIMPPFFNRY…RIACFMFIQS (102 aa). Fe cation is bound by residues His97, Asp99, and His160. Arg170 contributes to the 2-oxoglutarate binding site.

The cofactor is Fe(2+). It depends on L-ascorbate as a cofactor.

The protein is PKHD-type hydroxylase Neut_0373 of Nitrosomonas eutropha (strain DSM 101675 / C91 / Nm57).